The primary structure comprises 375 residues: MNMAERAEATKSWSCEPLSGKTLEEIVQNAENAADLVAYIRKPEVDLDFRLKFIAEHEEFFNVQLSDRNSRIRTCHNLSDKGIRGDTVFVFVPGLAGNLEQFEPLLELVDSDQKAFLTLDLPGFGHSSEWSDYPMLKVVELIFVLVCDVLRKWSTAVPNNDNVNPFNGHKIVLVGHSMGCFLACHLYEQHMADTKAVQTLVLLTPPKAHIEQLSKDKHIIQWALYGVFKLPWLFDVYRNKFDQVKGLQSSGIKQYFYQQGDDVKLKYRKFWQFKNNISNKSRTIIGYLLGWETVDWVKFNGVLTQTDMKQKIIIFGAEKDPIAPIENLEFYKQTINKECLRKVIILPDCSHNLCFDRPELVCENFQREVIDNSKL.

An AB hydrolase-1 domain is found at 88 to 358; the sequence is VFVFVPGLAG…CSHNLCFDRP (271 aa). S177 functions as the Charge relay system in the catalytic mechanism. The Microbody targeting signal signature appears at 373–375; the sequence is SKL.

It belongs to the AB hydrolase superfamily. Lipase family.

It localises to the lipid droplet. The catalysed reaction is a triacylglycerol + H2O = a diacylglycerol + a fatty acid + H(+). In terms of biological role, serine hydrolase required for the maintenance of steady state level of non-polar and polar lipids of lipid droplets and thus plays a role in maintaining the lipids homeostasis. Exhibits both esterase and triacylglycerol lipase activity. The polypeptide is Lipid droplet hydrolase 1 (Saccharomyces cerevisiae (strain ATCC 204508 / S288c) (Baker's yeast)).